The following is a 201-amino-acid chain: Small ribosomal subunit protein uS4 (201 aa).

Residues 92–155 (ARLDNVVFRL…KSLEVIANSL (64 aa)) form the S4 RNA-binding domain.

The protein belongs to the universal ribosomal protein uS4 family. As to quaternary structure, part of the 30S ribosomal subunit. Contacts protein S5. The interaction surface between S4 and S5 is involved in control of translational fidelity.

In terms of biological role, one of the primary rRNA binding proteins, it binds directly to 16S rRNA where it nucleates assembly of the body of the 30S subunit. With S5 and S12 plays an important role in translational accuracy. This Phocaeicola vulgatus (strain ATCC 8482 / DSM 1447 / JCM 5826 / CCUG 4940 / NBRC 14291 / NCTC 11154) (Bacteroides vulgatus) protein is Small ribosomal subunit protein uS4.